Here is a 125-residue protein sequence, read N- to C-terminus: Aldolase FrzH (125 aa).

It carries out the reaction (2S)-3-(4-methoxyphenyl)-2-[(3S)-3-(methylamino)-8-oxo-1-azaspiro[4.5]decan-1-yl]propanal = (1S,3S,6S,7S,8R)-7-hydroxy-6-[(4-methoxyphenyl)methyl]-3-(methylamino)-5-azatricyclo[6.3.1.0(1,5)]dodecan-9-one. It participates in secondary metabolite biosynthesis. Functionally, aldolase; part of the gene cluster that mediates the biosynthesis of the alkaloid (-)-FR901483, a potent immunosuppressant that shows efficacy in animal models and a probable inhibitor of purine nucleotide biosynthesis by targeting phosphoribosylpyrophosphate amidotransferase (PPAT). Within the pathway, FrzH is a new kind of aldolase with no similarities to known aldolases, and which catalyzes the intramolecular aldol condensation via formation of a C9-C3' bond to yield an aza-tricyclic product. The biosynthesis of (-)-FR901483 starts with the condensation of two L-tyrosines to yield (S,S)-dityrosyl-piperazine. This process occurs in 3 steps with the non-canonical nonribosomal peptide synthetase FrzA catalyzing the reduction of L-tyrosine into L-tyrosinal, the spontaneous condensation of 2 L-tyrosinal units, and the subsequent reduction by the NmrA-like family domain-containing oxidoreductase FrzB. The cytochrome P450 monooxygenase FrzC then performs coupling between N10 and C1' to morph the piperazine into a 1,4-diazabicyclo[3.2.1]octane spiro-fused to a 2,5-cyclohexadienone. The dienone portion is further reduced to cyclohexanone by the flavin-dependent reductase FrzD. The methyltranserases (MTs) FrzE and FrzF are then involved in the methylation at the C10' amine and the C4 phenolic oxygen, respectively. The order of the two MTs appear to be interchangeable. Cleavage of the C9-N10' bond by the dioxygenase FrzG then leads to formation of a conjugated iminium. In addition to the oxidation of C9, an additional dehydrogenation between C7 and C8 can occur to give a likely shunt product. The next biosynthetic step is the intramolecular aldol condensation catalyzed by the newly identified aldolase FrzH to yield an aza-tricyclic product with the formation of a C9-C3' bond. The short-chain dehydrogenase/reductase FrzI then produces dephospho-(-)-FR901483 that is phosphorylated at C4'-OH into (-)-FR901483 by the phosphotransferase FrzJ. The sequence is that of Aldolase FrzH from Cladobotryum sp.